A 203-amino-acid polypeptide reads, in one-letter code: Small ribosomal subunit protein uS4 (203 aa).

The 62-residue stretch at 93–154 (RRFDNVVYRC…KSRNLDAVAD (62 aa)) folds into the S4 RNA-binding domain.

Belongs to the universal ribosomal protein uS4 family. Part of the 30S ribosomal subunit. Contacts protein S5. The interaction surface between S4 and S5 is involved in control of translational fidelity.

One of the primary rRNA binding proteins, it binds directly to 16S rRNA where it nucleates assembly of the body of the 30S subunit. Functionally, with S5 and S12 plays an important role in translational accuracy. This chain is Small ribosomal subunit protein uS4, found in Chlorobaculum parvum (strain DSM 263 / NCIMB 8327) (Chlorobium vibrioforme subsp. thiosulfatophilum).